The following is a 160-amino-acid chain: Baculoviral IAP repeat-containing protein 5.1-B (160 aa).

A BIR repeat occupies 13-83 (QRLQDFRNMY…EGWEPDDDPW (71 aa)). Position 43 is a phosphothreonine; by CDK1 (T43). The Zn(2+) site is built by C66, C69, H86, and C93.

This sequence belongs to the IAP family. Component of the CPC at least composed of survivin/birc5, incenp, cdca8/borealin and/or cdca9/dasra-A, and aurkb/aurora-B. Interacts directly with incenp (via N-terminus), and may weakly interact with aurkb (via N-terminus) to stabilize the complex. Interacts with GTP-bound ran in both the S and M phases of the cell cycle. Also found in a complex with ubiquitin-mediated signaling proteins including at least usp9x/xFAM, nploc4/npl4 and ufd1. Ubiquitination is required for centrosome-targeting.

It is found in the cytoplasm. The protein resides in the nucleus. The protein localises to the chromosome. It localises to the centromere. Its subcellular location is the cytoskeleton. It is found in the spindle. Functionally, component of the chromosomal passenger complex (CPC), a complex that acts as a key regulator of mitosis. The CPC complex has essential functions at the centromere in ensuring correct chromosome alignment and segregation and is required for chromatin-induced microtubule stabilization and spindle assembly. Stimulates the mitotic kinase activity of aurkb/aurora-B in the CPC. Does not appear to exhibit anti-apoptotic activity. CPC. Does not appear to exhibit anti-apoptotic activity. The protein is Baculoviral IAP repeat-containing protein 5.1-B (birc5.1-b) of Xenopus laevis (African clawed frog).